Reading from the N-terminus, the 398-residue chain is Small ribosomal subunit protein mS29 (398 aa).

The transit peptide at 1-21 (MMLKGITRLISRIHKLDPGRF) directs the protein to the mitochondrion. Residues 39–67 (QVPVESPRAISRTNENDPAKHGDQHEGQH) are disordered. Over residues 52-66 (NENDPAKHGDQHEGQ) the composition is skewed to basic and acidic residues. Residues Met100 and 128-135 (GEKGTGKT) each bind GTP. N6-acetyllysine occurs at positions 175 and 207.

It belongs to the mitochondrion-specific ribosomal protein mS29 family. As to quaternary structure, component of the mitochondrial small ribosomal subunit (mt-SSU). Mature mammalian 55S mitochondrial ribosomes consist of a small (28S) and a large (39S) subunit. The 28S small subunit contains a 12S ribosomal RNA (12S mt-rRNA) and 30 different proteins. The 39S large subunit contains a 16S rRNA (16S mt-rRNA), a copy of mitochondrial valine transfer RNA (mt-tRNA(Val)), which plays an integral structural role, and 52 different proteins. Interacts with DELE1. Interacts with NOA1. Ubiquitous.

It is found in the mitochondrion. It carries out the reaction GTP + H2O = GDP + phosphate + H(+). Its function is as follows. As a component of the mitochondrial small ribosomal subunit, it plays a role in the translation of mitochondrial mRNAs. Involved in mediating interferon-gamma-induced cell death. Displays GTPase activity in vitro. This chain is Small ribosomal subunit protein mS29, found in Homo sapiens (Human).